A 257-amino-acid chain; its full sequence is Short-chain dehydrogenase reductase 3b (257 aa).

12-36 contributes to the NAD(+) binding site; sequence IITGGASGIGAESVRLFTEHGARVV. Ser144 contributes to the substrate binding site. The active-site Proton acceptor is the Tyr157.

It belongs to the short-chain dehydrogenases/reductases (SDR) family.

The chain is Short-chain dehydrogenase reductase 3b (SDR3b) from Arabidopsis thaliana (Mouse-ear cress).